The chain runs to 194 residues: Large ribosomal subunit protein bL27c (194 aa).

The N-terminal 57 residues, 1-57 (MAVTTSMSFNLMASFRGMSLSSSSSSSFFKGEFGPSSLRLPNKSPLSVSPFPLTIES), are a transit peptide targeting the chloroplast. Residues 57 to 76 (SAHKKGAGSTKNGRDSKGQR) form a disordered region.

In terms of assembly, component of the chloroplast large ribosomal subunit (LSU). Mature 70S chloroplast ribosomes of higher plants consist of a small (30S) and a large (50S) subunit. The 30S small subunit contains 1 molecule of ribosomal RNA (16S rRNA) and 24 different proteins. The 50S large subunit contains 3 rRNA molecules (23S, 5S and 4.5S rRNA) and 33 different proteins.

It is found in the plastid. It localises to the chloroplast. Component of the chloroplast ribosome (chloro-ribosome), a dedicated translation machinery responsible for the synthesis of chloroplast genome-encoded proteins, including proteins of the transcription and translation machinery and components of the photosynthetic apparatus. This Spinacia oleracea (Spinach) protein is Large ribosomal subunit protein bL27c (RPL27).